The chain runs to 315 residues: Acetyl-coenzyme A carboxylase carboxyl transferase subunit alpha (315 aa).

Residues 35–289 form the CoA carboxyltransferase C-terminal domain; that stretch reads KLSKKRFELM…RKAVAAELKI (255 aa).

The protein belongs to the AccA family. As to quaternary structure, acetyl-CoA carboxylase is a heterohexamer composed of biotin carboxyl carrier protein (AccB), biotin carboxylase (AccC) and two subunits each of ACCase subunit alpha (AccA) and ACCase subunit beta (AccD).

The protein resides in the cytoplasm. It catalyses the reaction N(6)-carboxybiotinyl-L-lysyl-[protein] + acetyl-CoA = N(6)-biotinyl-L-lysyl-[protein] + malonyl-CoA. The protein operates within lipid metabolism; malonyl-CoA biosynthesis; malonyl-CoA from acetyl-CoA: step 1/1. In terms of biological role, component of the acetyl coenzyme A carboxylase (ACC) complex. First, biotin carboxylase catalyzes the carboxylation of biotin on its carrier protein (BCCP) and then the CO(2) group is transferred by the carboxyltransferase to acetyl-CoA to form malonyl-CoA. This chain is Acetyl-coenzyme A carboxylase carboxyl transferase subunit alpha, found in Francisella tularensis subsp. mediasiatica (strain FSC147).